The following is a 937-amino-acid chain: Bifunctional glutamine synthetase adenylyltransferase/adenylyl-removing enzyme (937 aa).

An adenylyl removase region spans residues 1–436 (MSQPIPSASP…AAEFAELLAP (436 aa)). The tract at residues 443-937 (PDTLADYWRA…QLRFQPGKGA (495 aa)) is adenylyl transferase.

This sequence belongs to the GlnE family. Mg(2+) serves as cofactor.

It catalyses the reaction [glutamine synthetase]-O(4)-(5'-adenylyl)-L-tyrosine + phosphate = [glutamine synthetase]-L-tyrosine + ADP. It carries out the reaction [glutamine synthetase]-L-tyrosine + ATP = [glutamine synthetase]-O(4)-(5'-adenylyl)-L-tyrosine + diphosphate. In terms of biological role, involved in the regulation of glutamine synthetase GlnA, a key enzyme in the process to assimilate ammonia. When cellular nitrogen levels are high, the C-terminal adenylyl transferase (AT) inactivates GlnA by covalent transfer of an adenylyl group from ATP to specific tyrosine residue of GlnA, thus reducing its activity. Conversely, when nitrogen levels are low, the N-terminal adenylyl removase (AR) activates GlnA by removing the adenylyl group by phosphorolysis, increasing its activity. The regulatory region of GlnE binds the signal transduction protein PII (GlnB) which indicates the nitrogen status of the cell. In Xanthomonas campestris pv. campestris (strain B100), this protein is Bifunctional glutamine synthetase adenylyltransferase/adenylyl-removing enzyme.